The following is a 352-amino-acid chain: N-acetyl-gamma-glutamyl-phosphate reductase (352 aa).

Cysteine 155 is an active-site residue.

It belongs to the NAGSA dehydrogenase family. Type 1 subfamily.

The protein resides in the cytoplasm. The enzyme catalyses N-acetyl-L-glutamate 5-semialdehyde + phosphate + NADP(+) = N-acetyl-L-glutamyl 5-phosphate + NADPH + H(+). It participates in amino-acid biosynthesis; L-arginine biosynthesis; N(2)-acetyl-L-ornithine from L-glutamate: step 3/4. Its function is as follows. Catalyzes the NADPH-dependent reduction of N-acetyl-5-glutamyl phosphate to yield N-acetyl-L-glutamate 5-semialdehyde. This is N-acetyl-gamma-glutamyl-phosphate reductase from Brachyspira hyodysenteriae (strain ATCC 49526 / WA1).